The chain runs to 255 residues: 2-succinyl-6-hydroxy-2,4-cyclohexadiene-1-carboxylate synthase (255 aa).

It belongs to the AB hydrolase superfamily. MenH family. In terms of assembly, monomer.

The enzyme catalyses 5-enolpyruvoyl-6-hydroxy-2-succinyl-cyclohex-3-ene-1-carboxylate = (1R,6R)-6-hydroxy-2-succinyl-cyclohexa-2,4-diene-1-carboxylate + pyruvate. It participates in quinol/quinone metabolism; 1,4-dihydroxy-2-naphthoate biosynthesis; 1,4-dihydroxy-2-naphthoate from chorismate: step 3/7. Its pathway is quinol/quinone metabolism; menaquinone biosynthesis. Catalyzes a proton abstraction reaction that results in 2,5-elimination of pyruvate from 2-succinyl-5-enolpyruvyl-6-hydroxy-3-cyclohexene-1-carboxylate (SEPHCHC) and the formation of 2-succinyl-6-hydroxy-2,4-cyclohexadiene-1-carboxylate (SHCHC). The polypeptide is 2-succinyl-6-hydroxy-2,4-cyclohexadiene-1-carboxylate synthase (Serratia proteamaculans (strain 568)).